A 349-amino-acid chain; its full sequence is Cbb3-type cytochrome c oxidase subunit CcoP (349 aa).

Positions 1-67 are disordered; sequence MADTDDEHAS…RVVRDRKGGR (67 aa). The Cytoplasmic portion of the chain corresponds to 1 to 96; it reads MADTDDEHAS…NPLPRWWLWT (96 aa). The span at 16-30 shows a compositional bias: basic and acidic residues; the sequence is NRIELERQAADEAHK. The chain crosses the membrane as a helical span at residues 97-117; the sequence is FYATIVWGVLYLIAYPAIPLV. Residues 118 to 349 lie on the Periplasmic side of the membrane; it reads NGATQGLLGQ…AYVHSLGGGE (232 aa). Cytochrome c domains are found at residues 168 to 258 and 265 to 346; these read YTAN…LELG and ALAA…HSLG. 8 residues coordinate heme c: Cys-181, Cys-184, His-185, Met-233, Cys-278, Cys-281, His-282, and Met-323.

It belongs to the CcoP / FixP family. As to quaternary structure, component of the cbb3-type cytochrome c oxidase at least composed of CcoN, CcoO, CcoQ and CcoP. Requires heme c as cofactor.

Its subcellular location is the cell inner membrane. Its pathway is energy metabolism; oxidative phosphorylation. Functionally, C-type cytochrome. Part of the cbb3-type cytochrome c oxidase complex. CcoP subunit is required for transferring electrons from donor cytochrome c via its heme groups to CcoO subunit. From there, electrons are shuttled to the catalytic binuclear center of CcoN subunit where oxygen reduction takes place. The complex also functions as a proton pump. This chain is Cbb3-type cytochrome c oxidase subunit CcoP, found in Paracoccus denitrificans (strain Pd 1222).